A 300-amino-acid chain; its full sequence is Zinc finger protein 705B (300 aa).

One can recognise a KRAB domain in the interval 7 to 78 (VTFEDVAIDF…GRVFLQDQNP (72 aa)). C2H2-type zinc fingers lie at residues 172-194 (YQCN…KMTH), 200-222 (YACH…EKTH), and 228-250 (YKCH…ERTH). A C2H2-type 4; degenerate zinc finger spans residues 256–278 (YECDKSGKAFSQSSGFRGNKIIH).

The protein belongs to the krueppel C2H2-type zinc-finger protein family.

It is found in the nucleus. May be involved in transcriptional regulation. The polypeptide is Zinc finger protein 705B (ZNF705B) (Homo sapiens (Human)).